We begin with the raw amino-acid sequence, 89 residues long: Large ribosomal subunit protein bL27 (89 aa).

Positions 1–21 are disordered; the sequence is MAHKKAGGSSRNGRDSAGRRL.

It belongs to the bacterial ribosomal protein bL27 family.

In Erythrobacter litoralis (strain HTCC2594), this protein is Large ribosomal subunit protein bL27.